A 444-amino-acid chain; its full sequence is METAIEDAGLDRGPTLTSSWDAACGALTQSLFLTRTGPRAQDLDFEQLLAPPAQGPDLVSLKSSLSPRDENPCFIYLKCGPNGGEEILSVGILSSARNMEVYLGEEYCGTSRGKNVCTVLDNSEHEKILLYKKYLKLESPTHACKIKLLSFGEEQCVLISKVVVHLRPRSAKPSPSSPALGSRIDLDNIQTIMESMGSKLSPGAQQLMDMIRFQQQNCLPIRDQLQSVLGTAGHKHLMALQSSPSSGVVDKASSTPFPFRTGLTPSAITENLKALIDKSTQPSGEGNTTNHNECHLMPQNHSLESDLKNAVSSFLPKKASGSSSVPNSELLPFLQNLCSQVNHLRVGHNARWQENVSKPREGTVGVPLEEQPVCSYLEKILSKNMEVMEKKLMKHIDERIYQLQEHIDAKMALLVDLLRSPNSPSPGMPLRHYDSRERLSNGER.

Phosphoserine is present on residues S177, S182, S254, and S302. The segment at 424–444 is disordered; the sequence is PSPGMPLRHYDSRERLSNGER. A compositionally biased stretch (basic and acidic residues) spans 431-444; sequence RHYDSRERLSNGER.

In terms of assembly, homodimer. Interacts with ABCB7, ABCB8/MITOSUR and ABCB10.

The protein localises to the cytoplasm. It is found in the mitochondrion. The catalysed reaction is ATP + H2O = ADP + phosphate + H(+). ATPase that regulates mitochondrial ABC transporters ABCB7, ABCB8/MITOSUR and ABCB10. Regulates mitochondrial ferric concentration and heme biosynthesis and plays a role in the maintenance of mitochondrial homeostasis and cell survival. The protein is ATPase PAAT of Rattus norvegicus (Rat).